The sequence spans 395 residues: L-lactate dehydrogenase (395 aa).

An FMN hydroxy acid dehydrogenase domain is found at 1-380 (MIISAASDYR…SKDSLVQELS (380 aa)). Substrate is bound at residue Y24. FMN-binding residues include S106 and Q127. Residue Y129 coordinates substrate. T155 is an FMN binding site. R164 serves as a coordination point for substrate. Residue K251 participates in FMN binding. H275 functions as the Proton acceptor in the catalytic mechanism. Position 278 (R278) interacts with substrate. 306–330 (DSGIRNGLDVVRMIALGADSVLLGR) serves as a coordination point for FMN.

It belongs to the FMN-dependent alpha-hydroxy acid dehydrogenase family. FMN is required as a cofactor.

The protein resides in the cell inner membrane. It catalyses the reaction (S)-lactate + A = pyruvate + AH2. Functionally, catalyzes the conversion of L-lactate to pyruvate. Is coupled to the respiratory chain. The chain is L-lactate dehydrogenase from Enterobacter sp. (strain 638).